The primary structure comprises 256 residues: 1-(5-phosphoribosyl)-5-[(5-phosphoribosylamino)methylideneamino] imidazole-4-carboxamide isomerase (256 aa).

Asp9 acts as the Proton acceptor in catalysis. Asp130 serves as the catalytic Proton donor.

It belongs to the HisA/HisF family.

The protein localises to the cytoplasm. It catalyses the reaction 1-(5-phospho-beta-D-ribosyl)-5-[(5-phospho-beta-D-ribosylamino)methylideneamino]imidazole-4-carboxamide = 5-[(5-phospho-1-deoxy-D-ribulos-1-ylimino)methylamino]-1-(5-phospho-beta-D-ribosyl)imidazole-4-carboxamide. The protein operates within amino-acid biosynthesis; L-histidine biosynthesis; L-histidine from 5-phospho-alpha-D-ribose 1-diphosphate: step 4/9. This chain is 1-(5-phosphoribosyl)-5-[(5-phosphoribosylamino)methylideneamino] imidazole-4-carboxamide isomerase, found in Prochlorococcus marinus (strain SARG / CCMP1375 / SS120).